The following is a 119-amino-acid chain: Hydrogenase maturation factor HypA (119 aa).

H2 provides a ligand contact to Ni(2+). Zn(2+) contacts are provided by C73, C76, C89, and C92.

This sequence belongs to the HypA/HybF family.

In terms of biological role, involved in the maturation of [NiFe] hydrogenases. Required for nickel insertion into the metal center of the hydrogenase. The sequence is that of Hydrogenase maturation factor HypA from Dehalococcoides mccartyi (strain ATCC BAA-2100 / JCM 16839 / KCTC 5957 / BAV1).